The sequence spans 161 residues: Phosphopantetheine adenylyltransferase (161 aa).

Position 8 (Ser-8) interacts with substrate. Residues 8 to 9 (SF) and His-16 contribute to the ATP site. Positions 40, 72, and 86 each coordinate substrate. ATP contacts are provided by residues 87 to 89 (GLR), Glu-97, and 122 to 128 (HSFLSSS).

It belongs to the bacterial CoaD family. Homohexamer. The cofactor is Mg(2+).

It is found in the cytoplasm. The enzyme catalyses (R)-4'-phosphopantetheine + ATP + H(+) = 3'-dephospho-CoA + diphosphate. Its pathway is cofactor biosynthesis; coenzyme A biosynthesis; CoA from (R)-pantothenate: step 4/5. Its function is as follows. Reversibly transfers an adenylyl group from ATP to 4'-phosphopantetheine, yielding dephospho-CoA (dPCoA) and pyrophosphate. This is Phosphopantetheine adenylyltransferase from Gloeobacter violaceus (strain ATCC 29082 / PCC 7421).